Consider the following 200-residue polypeptide: Probable GTP-binding protein EngB (200 aa).

Positions 26-200 constitute an EngB-type G domain; the sequence is SIPEIAIAGR…IYEIAQCIKK (175 aa). GTP-binding positions include 34–41, 61–65, 80–83, 147–150, and 176–179; these read GRSNVGKS, GCTKQ, DLPG, TKID, and VISA. Residues Ser41 and Thr63 each contribute to the Mg(2+) site.

It belongs to the TRAFAC class TrmE-Era-EngA-EngB-Septin-like GTPase superfamily. EngB GTPase family. Mg(2+) serves as cofactor.

In terms of biological role, necessary for normal cell division and for the maintenance of normal septation. The sequence is that of Probable GTP-binding protein EngB from Ehrlichia canis (strain Jake).